Consider the following 159-residue polypeptide: uncharacterized protein (159 aa).

The N-acetyltransferase domain occupies 1–139 (MNIIPTCQVP…TARKMKPEIP (139 aa)).

This is an uncharacterized protein from Bacillus subtilis (strain 168).